Reading from the N-terminus, the 131-residue chain is Small ribosomal subunit protein eS8 (131 aa).

A disordered region spans residues 1–42 (MKLGAYYKGGDLKKPSGGKKRKVRKTKKKALGGGPPQIPKLG). Residues 16-30 (SGGKKRKVRKTKKKA) show a composition bias toward basic residues.

Belongs to the eukaryotic ribosomal protein eS8 family. Part of the 30S ribosomal subunit.

In Pyrobaculum aerophilum (strain ATCC 51768 / DSM 7523 / JCM 9630 / CIP 104966 / NBRC 100827 / IM2), this protein is Small ribosomal subunit protein eS8.